We begin with the raw amino-acid sequence, 258 residues long: Synaptosomal-associated protein 29 (258 aa).

The segment at 1 to 41 (MSAYPKSYNPFDDDGEDEGARPAPWRDARDLPDGPDAPADR) is disordered. The span at 18 to 32 (EGARPAPWRDARDLP) shows a compositional bias: basic and acidic residues. Positions 76–107 (ASSEELARQRGVLERTEKMVDKMDQDLKISQK) form a coiled coil. Ser77, Ser78, and Ser114 each carry phosphoserine. Residues 127 to 190 (PVETPPEQNG…GSAVSTDAYP (64 aa)) form a disordered region. Phosphothreonine occurs at positions 130 and 137. Polar residues predominate over residues 132-144 (PEQNGTLASQPNS). Phosphoserine occurs at positions 163, 182, 185, 204, and 210. Positions 196–258 (QAYHQKIDSN…KSTERKVRQL (63 aa)) constitute a t-SNARE coiled-coil homology domain.

Belongs to the SNAP-25 family. Forms a SNARE complex, composed of VAMP8, SNAP29 and STX17, involved in fusion of autophagosome with lysosome. Interacts with multiple syntaxins including STX6. Interacts with EIPR1. Interacts with STX17; this interaction is increased in the absence of TMEM39A.

Its subcellular location is the cytoplasm. It is found in the golgi apparatus membrane. The protein localises to the cytoplasmic vesicle. The protein resides in the autophagosome membrane. It localises to the cell projection. Its subcellular location is the cilium membrane. Its function is as follows. SNAREs, soluble N-ethylmaleimide-sensitive factor-attachment protein receptors, are essential proteins for fusion of cellular membranes. SNAREs localized on opposing membranes assemble to form a trans-SNARE complex, an extended, parallel four alpha-helical bundle that drives membrane fusion. SNAP29 is a SNARE involved in autophagy through the direct control of autophagosome membrane fusion with the lysososome membrane. Also plays a role in ciliogenesis by regulating membrane fusions. This is Synaptosomal-associated protein 29 from Pongo abelii (Sumatran orangutan).